We begin with the raw amino-acid sequence, 237 residues long: CDP-diacylglycerol--serine O-phosphatidyltransferase (237 aa).

The next 8 membrane-spanning stretches (helical) occupy residues 3 to 23 (INPLYLFPNLFTASSIFLGMM), 25 to 45 (IFYASSYQFVMACWLVVASLI), 73 to 93 (VVAFGVAPSLITYFYVGYNFG), 95 to 115 (IGMAVSALFVIFGAIRLARFN), 124 to 144 (YSFIGIPIPAAAVLVVLCVLL), 150 to 170 (FLEGNTEKLFLGFIVLLGVLM), 184 to 204 (WNLKLFILVLIFLSLVFVRPL), and 207 to 227 (LSVFMGLYLIYGIIRWIFLMV).

This sequence belongs to the CDP-alcohol phosphatidyltransferase class-I family.

The protein resides in the cell membrane. The enzyme catalyses a CDP-1,2-diacyl-sn-glycerol + L-serine = a 1,2-diacyl-sn-glycero-3-phospho-L-serine + CMP + H(+). The polypeptide is CDP-diacylglycerol--serine O-phosphatidyltransferase (pssA) (Helicobacter pylori (strain J99 / ATCC 700824) (Campylobacter pylori J99)).